A 147-amino-acid polypeptide reads, in one-letter code: Adenylylsulfatase HINT1 (147 aa).

The HIT domain occupies 37 to 147 (IFDKIISKEI…GGRQMNWPPG (111 aa)). The Histidine triad motif motif lies at 131 to 135 (HIHVH). His133 (tele-AMP-histidine intermediate) is an active-site residue. His135 is a binding site for substrate.

Its subcellular location is the peroxisome. The protein resides in the plastid. It localises to the chloroplast. The catalysed reaction is adenosine 5'-phosphosulfate + H2O = sulfate + AMP + 2 H(+). Its function is as follows. Possesses adenylylsulfatase activity in vitro. This is Adenylylsulfatase HINT1 from Arabidopsis thaliana (Mouse-ear cress).